Consider the following 821-residue polypeptide: Tip elongation aberrant protein Tea4 (821 aa).

Polar residues-rich tracts occupy residues 1–11 and 21–31; these read MLHMNSASSAD and DPTQQNDSTII. The interval 1 to 36 is disordered; that stretch reads MLHMNSASSADSMEIMESHFDPTQQNDSTIIESRYS. Tyr35 bears the Phosphotyrosine mark. At Ser36 the chain carries Phosphoserine. Tyr40 bears the Phosphotyrosine mark. The tract at residues 51 to 79 is disordered; the sequence is ISGENSEPQTVASQEISDSQEEDTTLTSS. The span at 53 to 67 shows a compositional bias: polar residues; sequence GENSEPQTVASQEIS. Positions 130–191 constitute an SH3 domain; that stretch reads IDCNFVHAIR…PAEYIETPSE (62 aa). 5 disordered regions span residues 267 to 292, 333 to 352, 473 to 500, 529 to 570, and 664 to 697; these read LEIE…DHVT, SSTT…FSSA, DSFD…MPNN, SPRL…SSLL, and DASS…SFSS. Positions 268 to 282 are enriched in low complexity; that stretch reads EIEFSDSSDSSLSAE. Residues 283–292 are compositionally biased toward basic and acidic residues; that stretch reads YRSESEDHVT. Composition is skewed to polar residues over residues 333 to 350 and 473 to 484; these read SSTT…SKFS and DSFDTSNVTQDA. Residues 527–821 form an interaction with tea1 region; the sequence is LLSPRLYSSS…EMASLLNTNR (295 aa). Positions 529 to 541 are enriched in low complexity; the sequence is SPRLYSSSTPSSP. Basic and acidic residues predominate over residues 554 to 563; sequence ENRKQADKVE. Residues 599-821 form an interaction with win1 region; it reads KAFSQSSIDL…EMASLLNTNR (223 aa). The segment covering 665 to 674 has biased composition (low complexity); the sequence is ASSAIPSSSI. Residues 675–687 are compositionally biased toward basic and acidic residues; sequence SHDEDLLPRKNTE.

As to quaternary structure, an essential component of the tea1 cell-end complex. Interacts with win1, tea1 and for3. Interacts with tip1 in the presence of tea1.

It is found in the cytoplasm. Its subcellular location is the cytoskeleton. In terms of biological role, cell polarity factor essential for the bipolar localization and function of structures containing the cell-end marker tea1 during the normal cell cycle. Regulates cell polarity in complex with tea1 and together with the stress signaling MAPK cascade, contributes to cell polarity maintenance under stress conditions. Required for the localization of for3 at the cell tip specifically during initiation of bipolar growth. During the new end take off (NETO), formation of a protein complex that includes tea1, tea4 and for3 is necessary and sufficient for the establishment of cell polarity and localized actin assembly at new cell ends. The chain is Tip elongation aberrant protein Tea4 from Schizosaccharomyces pombe (strain 972 / ATCC 24843) (Fission yeast).